Here is a 1143-residue protein sequence, read N- to C-terminus: cGMP-specific 3',5'-cyclic phosphodiesterase (1143 aa).

Composition is skewed to low complexity over residues 1-19 (MHGP…DVSS) and 31-45 (TTSS…ASSS). Residues 1–167 (MHGPVSRSSS…KASTTASQQD (167 aa)) are disordered. The segment covering 46–59 (KPLTNGANKTTIST) has biased composition (polar residues). Low complexity predominate over residues 75–84 (GAIPASSSSG). Over residues 96 to 107 (SNNNRPAATNRS) the composition is skewed to polar residues. The span at 131-153 (SSSSPSQSPSQTQASIQTQTSQQ) shows a compositional bias: low complexity. GAF domains lie at 272-424 (DIDV…GIGI) and 456-637 (NLEC…GLGI). One can recognise a PDEase domain in the interval 667 to 990 (SQDQTEKLTQ…RNWQDLAEKV (324 aa)). Residue histidine 743 is the Proton donor of the active site. A divalent metal cation is bound by residues histidine 747, histidine 783, aspartate 784, and aspartate 894. Disordered regions lie at residues 1031–1060 (QQSQ…TGAL) and 1090–1143 (SHVS…CALL). Basic and acidic residues-rich tracts occupy residues 1036 to 1047 (GSEDSHTPEHQR) and 1090 to 1100 (SHVSEDMDDKS). The span at 1109 to 1127 (ASGSMGRMSASSSTSSTGG) shows a compositional bias: low complexity. The segment covering 1133–1143 (SKKRSKLCALL) has biased composition (basic residues). Cysteine 1140 carries the post-translational modification Cysteine methyl ester. A lipid anchor (S-farnesyl cysteine) is attached at cysteine 1140. A propeptide spans 1141-1143 (ALL) (removed in mature form).

Belongs to the cyclic nucleotide phosphodiesterase family. Interacts with PrBP. A divalent metal cation is required as a cofactor.

Its subcellular location is the cell membrane. The enzyme catalyses 3',5'-cyclic GMP + H2O = GMP + H(+). In terms of biological role, has a role regulating cGMP transport in Malpighian tubule principal cells. In Drosophila simulans (Fruit fly), this protein is cGMP-specific 3',5'-cyclic phosphodiesterase.